A 159-amino-acid polypeptide reads, in one-letter code: 18.0 kDa class I heat shock protein (159 aa).

Residues 45–159 (ETAAFANTHI…PEVKSIHISG (115 aa)) form the sHSP domain.

The protein belongs to the small heat shock protein (HSP20) family. Forms oligomeric structures.

The protein localises to the cytoplasm. This Daucus carota (Wild carrot) protein is 18.0 kDa class I heat shock protein.